A 216-amino-acid chain; its full sequence is Coiled-coil domain-containing protein 124 (216 aa).

Disordered stretches follow at residues 1–93 (MPKK…PSKV) and 194–216 (LKKEWTKSPENPLNQRAASYNTK). Positions 18–90 (RKAEAKAVAD…IKGKQTKEGP (73 aa)) are enriched in basic and acidic residues. The stretch at 18 to 119 (RKAEAKAVAD…EIKEKEKSHL (102 aa)) forms a coiled coil. Residues 201 to 216 (SPENPLNQRAASYNTK) are compositionally biased toward polar residues.

It belongs to the CCDC124 family. As to quaternary structure, associates with translationally inactive ribosomes in the nonrotated state.

The protein resides in the cytoplasm. It localises to the cytoskeleton. The protein localises to the microtubule organizing center. It is found in the centrosome. Its subcellular location is the midbody. Its function is as follows. Ribosome-binding protein involved in ribosome hibernation: associates with translationally inactive ribosomes and stabilizes the nonrotated conformation of the 80S ribosome, thereby promoting ribosome preservation and storage. This Danio rerio (Zebrafish) protein is Coiled-coil domain-containing protein 124 (ccdc124).